We begin with the raw amino-acid sequence, 1088 residues long: Myocardin-related transcription factor B (1088 aa).

Glu22 carries the phosphoserine modification. The stretch at 40–65 is one RPEL 1 repeat; the sequence is EVLQLRLQQRRTREQLVDQGIMPPLK. Ser66 is modified (phosphoserine). RPEL repeat units follow at residues 84–109 and 128–153; these read NFLK…EETF and DDLN…PVDS. Disordered stretches follow at residues 165-310, 349-389, 472-508, and 528-553; these read EDYP…NEPQ, KPLN…PSSL, AELP…STDD, and LSSS…SNLE. The span at 197 to 213 shows a compositional bias: low complexity; it reads SAASPSEPKVSESPSPV. Polar residues predominate over residues 214-226; it reads TTNTPAQFASVSP. The span at 238-248 shows a compositional bias: pro residues; it reads ADQPPPRPAAP. The segment covering 272 to 287 has biased composition (basic and acidic residues); sequence NPNDKHRSKKCKDPKP. Low complexity predominate over residues 355-366; that stretch reads NSNSGNSALNNA. Phosphothreonine is present on residues Thr367 and Thr370. The span at 367 to 378 shows a compositional bias: polar residues; the sequence is TPNTPRQNTSTP. The region spanning 389–423 is the SAP domain; the sequence is LDDLKVSELKTELKLRGLPVSGTKPDLIERLKPYQ. A compositionally biased stretch (polar residues) spans 528–540; the sequence is LSSSPLRMTNNED. Residues Ser541 and Ser543 each carry the phosphoserine modification. The segment covering 541–550 has biased composition (low complexity); that stretch reads SLSPTSSTLS. Residues 545–601 are a coiled coil; that stretch reads TSSTLSNLELDAAEKDRKLQEKEKQIEELKRKLEQEQKLVEVLKMQLEVEKRGQQQR. The segment at 563 to 591 is required for interaction with itself and with MRTFA; sequence LQEKEKQIEELKRKLEQEQKLVEVLKMQL. Disordered stretches follow at residues 595–655 and 829–886; these read KRGQ…QPVS and NAPL…STQA. Residue Lys628 forms a Glycyl lysine isopeptide (Lys-Gly) (interchain with G-Cter in SUMO1) linkage. A compositionally biased stretch (polar residues) spans 829–838; it reads NAPLPSLQNG. Basic and acidic residues predominate over residues 867–879; sequence KTKDPPRYEEAIK. Position 921 is a phosphoserine (Ser921).

Interacts with MRTFA and SRF. In terms of processing, O-glycosylated.

Its subcellular location is the nucleus. In terms of biological role, acts as a transcriptional coactivator of serum response factor (SRF). Required for skeletal myogenic differentiation. This chain is Myocardin-related transcription factor B, found in Homo sapiens (Human).